Consider the following 283-residue polypeptide: MTVQKSKNPQVDIAEDNAFFPSEYSLSQYTSPVSDLDGVDYPKPYRGKHKILVIAADERYLPTDNGKLFSTGNHPIETLLPLYHLHAAGFEFEVATISGLMTKFEYWAMPHKDEKVMPFFEQHKSLFRNPKKLADVVASLNADSEYAAIFVPGGHGALIGLPESQDVAAALQWAIKNDRFVISLCHGPAAFLALRHGDNPLNGYSICAFPDAADKQTPEIGYMPGHLTWYFGEELKKMGMNIINDDIAGRVHKDRKVLTGDSPFAANALGKLAAQEMLAAYAG.

Residues His-86, Glu-91, and His-123 each contribute to the Zn(2+) site. The Nucleophile role is filled by Cys-185.

Belongs to the peptidase C56 family. HchA subfamily. Homodimer.

It is found in the cytoplasm. It catalyses the reaction N(omega)-(1-hydroxy-2-oxopropyl)-L-arginyl-[protein] + H2O = lactate + L-arginyl-[protein] + H(+). The catalysed reaction is N(6)-(1-hydroxy-2-oxopropyl)-L-lysyl-[protein] + H2O = lactate + L-lysyl-[protein] + H(+). The enzyme catalyses S-(1-hydroxy-2-oxopropyl)-L-cysteinyl-[protein] + H2O = lactate + L-cysteinyl-[protein] + H(+). It carries out the reaction N(omega)-(1-hydroxy-2-oxoethyl)-L-arginyl-[protein] + H2O = L-arginyl-[protein] + glycolate + H(+). It catalyses the reaction N(6)-(1-hydroxy-2-oxoethyl)-L-lysyl-[protein] + H2O = glycolate + L-lysyl-[protein] + H(+). The catalysed reaction is S-(1-hydroxy-2-oxoethyl)-L-cysteinyl-[protein] + H2O = glycolate + L-cysteinyl-[protein] + H(+). The enzyme catalyses N(2)-(1-hydroxy-2-oxopropyl)-dGTP + H2O = lactate + dGTP + H(+). It carries out the reaction N(2)-(1-hydroxy-2-oxopropyl)-GTP + H2O = lactate + GTP + H(+). It catalyses the reaction N(2)-(1-hydroxy-2-oxopropyl)-GDP + H2O = lactate + GDP + H(+). The catalysed reaction is N(2)-(1-hydroxy-2-oxopropyl)-GMP + H2O = lactate + GMP + H(+). The enzyme catalyses N(2)-(1-hydroxy-2-oxoethyl)-dGTP + H2O = dGTP + glycolate + H(+). It carries out the reaction N(2)-(1-hydroxy-2-oxoethyl)-GTP + H2O = glycolate + GTP + H(+). It catalyses the reaction N(2)-(1-hydroxy-2-oxoethyl)-GDP + H2O = glycolate + GDP + H(+). The catalysed reaction is N(2)-(1-hydroxy-2-oxoethyl)-GMP + H2O = glycolate + GMP + H(+). The enzyme catalyses an N(2)-(1-hydroxy-2-oxopropyl)-guanosine in RNA + H2O = a guanosine in RNA + lactate + H(+). It carries out the reaction an N(2)-(1-hydroxy-2-oxopropyl)-2'-deoxyguanosine in DNA + H2O = a 2'-deoxyguanosine in DNA + lactate + H(+). It catalyses the reaction an N(2)-(1-hydroxy-2-oxoethyl)-guanosine in RNA + H2O = a guanosine in RNA + glycolate + H(+). The catalysed reaction is an N(2)-(1-hydroxy-2-oxoethyl)-2'-deoxyguanosine in DNA + H2O = a 2'-deoxyguanosine in DNA + glycolate + H(+). Functionally, protein and nucleotide deglycase that catalyzes the deglycation of the Maillard adducts formed between amino groups of proteins or nucleotides and reactive carbonyl groups of glyoxals. Thus, functions as a protein deglycase that repairs methylglyoxal- and glyoxal-glycated proteins, and releases repaired proteins and lactate or glycolate, respectively. Deglycates cysteine, arginine and lysine residues in proteins, and thus reactivates these proteins by reversing glycation by glyoxals. Acts on early glycation intermediates (hemithioacetals and aminocarbinols), preventing the formation of Schiff bases and advanced glycation endproducts (AGE). Also functions as a nucleotide deglycase able to repair glycated guanine in the free nucleotide pool (GTP, GDP, GMP, dGTP) and in DNA and RNA. Is thus involved in a major nucleotide repair system named guanine glycation repair (GG repair), dedicated to reversing methylglyoxal and glyoxal damage via nucleotide sanitization and direct nucleic acid repair. Plays an important role in protecting cells from carbonyl stress. This Escherichia coli O8 (strain IAI1) protein is Protein/nucleic acid deglycase HchA.